The chain runs to 115 residues: SOSS complex subunit C homolog (115 aa).

The protein belongs to the SOSS-C family.

The sequence is that of SOSS complex subunit C homolog from Drosophila mojavensis (Fruit fly).